The sequence spans 212 residues: uncharacterized protein (212 aa).

This is an uncharacterized protein from Mycobacterium tuberculosis (strain ATCC 25618 / H37Rv).